The sequence spans 217 residues: MLAILDYKAGNQTSVRRALEHLGVPCAITADPAMLESAAGVIFPGVGAAGQAMSALAEAGLDKALHHVARRGQPLLGICLGCQILLESSEENAAKTLGIVPGVCRRFEDHMRQEDGSAAPVPHMGWNSLEAVAPCVLLDGIDPASEYYFVHSYYVEPDPSLVLATTTYGRTFCSLYGRDGLWAAQFHPEKSGRPGLRLLGNFYEYCRQSRQEARHAQ.

The Glutamine amidotransferase type-1 domain maps to 1–212; sequence MLAILDYKAG…YEYCRQSRQE (212 aa). Cysteine 79 functions as the Nucleophile in the catalytic mechanism. Active-site residues include histidine 187 and glutamate 189.

In terms of assembly, heterodimer of HisH and HisF.

Its subcellular location is the cytoplasm. It carries out the reaction 5-[(5-phospho-1-deoxy-D-ribulos-1-ylimino)methylamino]-1-(5-phospho-beta-D-ribosyl)imidazole-4-carboxamide + L-glutamine = D-erythro-1-(imidazol-4-yl)glycerol 3-phosphate + 5-amino-1-(5-phospho-beta-D-ribosyl)imidazole-4-carboxamide + L-glutamate + H(+). It catalyses the reaction L-glutamine + H2O = L-glutamate + NH4(+). Its pathway is amino-acid biosynthesis; L-histidine biosynthesis; L-histidine from 5-phospho-alpha-D-ribose 1-diphosphate: step 5/9. Its function is as follows. IGPS catalyzes the conversion of PRFAR and glutamine to IGP, AICAR and glutamate. The HisH subunit catalyzes the hydrolysis of glutamine to glutamate and ammonia as part of the synthesis of IGP and AICAR. The resulting ammonia molecule is channeled to the active site of HisF. This chain is Imidazole glycerol phosphate synthase subunit HisH, found in Desulfovibrio desulfuricans (strain ATCC 27774 / DSM 6949 / MB).